The primary structure comprises 131 residues: Large ribosomal subunit protein bL12c (131 aa).

It belongs to the bacterial ribosomal protein bL12 family. In terms of assembly, homodimer. Part of the ribosomal stalk of the 50S ribosomal subunit. Forms a multimeric L10(L12)X complex, where L10 forms an elongated spine to which 2 to 4 L12 dimers bind in a sequential fashion. Binds GTP-bound translation factors.

It is found in the plastid. It localises to the chloroplast. Functionally, forms part of the ribosomal stalk which helps the ribosome interact with GTP-bound translation factors. Is thus essential for accurate translation. The protein is Large ribosomal subunit protein bL12c of Euglena gracilis.